The primary structure comprises 126 residues: MTASTALTVAIWIGVMLIGGIGSVLRFLVDRSVARRLARTFPYGTLTVNITGAALLGFLAGLALPKDAALLAGTGFVGAYTTFSTWMLETQRLGEDRQMVSALANIVVSVVLGLAAALLGQWIAQI.

The next 4 helical transmembrane spans lie at 5 to 25 (TALT…GSVL), 44 to 64 (GTLT…GLAL), 68 to 88 (AALL…TWML), and 99 to 119 (MVSA…AALL). The Na(+) site is built by Gly78 and Thr81.

This sequence belongs to the fluoride channel Fluc/FEX (TC 1.A.43) family.

The protein localises to the cell membrane. It catalyses the reaction fluoride(in) = fluoride(out). Its activity is regulated as follows. Na(+) is not transported, but it plays an essential structural role and its presence is essential for fluoride channel function. In terms of biological role, fluoride-specific ion channel. Important for reducing fluoride concentration in the cell, thus reducing its toxicity. The sequence is that of Fluoride-specific ion channel FluC 2 from Mycobacterium bovis (strain ATCC BAA-935 / AF2122/97).